A 624-amino-acid polypeptide reads, in one-letter code: Protein NRT1/ PTR FAMILY 6.1 (624 aa).

The segment at 1–20 is disordered; the sequence is MVASEIKSPVSVPETPGSSS. The next 2 membrane-spanning stretches (helical) occupy residues 83 to 100 and 114 to 134; these read MAYFGLSVNMVAFMFYVM and FLGISQASSVLGGFLADAYLG. At Thr138 the chain carries Phosphothreonine. A run of 10 helical transmembrane segments spans residues 139–159, 184–204, 230–250, 258–278, 378–398, 422–442, 459–479, 504–524, 537–557, and 585–605; these read IAIFTTMYLVGLIGITLGASL, SWQMLYLYTVLYITGFGAAGI, FFNFFYLSVTLGAIIAFTLVV, WGMAFGTLAVAMGISNALFFA, LIPIPTCTIMLSLVLTEYLTL, VFPGLSIFLILSLYYSVFVPI, VGIGLAVSIISVAWAGLFENY, WLLIQYCLIGIAEVFCIVGLL, SIGSAYAALAGGLGCFAATIL, and CLYWLLTLLSFLNFCVFLWSA.

The protein belongs to the major facilitator superfamily. Proton-dependent oligopeptide transporter (POT/PTR) (TC 2.A.17) family. Expressed in flower and siliques.

The protein localises to the membrane. In Arabidopsis thaliana (Mouse-ear cress), this protein is Protein NRT1/ PTR FAMILY 6.1 (NPF6.1).